A 588-amino-acid polypeptide reads, in one-letter code: Transport ATP-binding protein AarD (588 aa).

In terms of domain architecture, ABC transmembrane type-1 spans 24 to 316 (LRISMLLGVV…LGTYYHAKAQ (293 aa)). 6 consecutive transmembrane segments (helical) span residues 29-49 (LLGV…AVIL), 62-82 (LLTP…LTVI), 149-169 (IIPI…ALIL), 170-190 (FATA…AADA), 250-270 (SGVL…YFGF), and 276-296 (LNFG…ALIL). The 234-residue stretch at 350-583 (IEANKLEIYS…EGPFARLLAH (234 aa)) folds into the ABC transporter domain. 383 to 390 (GQSGAGKS) serves as a coordination point for ATP.

The protein belongs to the ABC transporter superfamily.

It localises to the cell inner membrane. Somehow involved in the cytochrome D branch of aerobic respiration. Seems to be a component of a transport system. The protein is Transport ATP-binding protein AarD (aarD) of Providencia stuartii.